The following is an 807-amino-acid chain: Lysyl oxidase homolog 3B (807 aa).

The first 24 residues, 1–24, serve as a signal peptide directing secretion; that stretch reads MELHQWCRHIIVFLLNVWIPSCFA. SRCR domains are found at residues 49 to 150, 175 to 288, 309 to 409, 419 to 470, and 476 to 579; these read FRLS…VICK, VRLR…VSCV, TRLK…VRCN, VRIL…LGYA, and VRLS…VICS. 9 disulfide bridges follow: cysteine 75-cysteine 139, cysteine 88-cysteine 149, cysteine 119-cysteine 129, cysteine 207-cysteine 277, cysteine 220-cysteine 287, cysteine 254-cysteine 264, cysteine 334-cysteine 398, cysteine 347-cysteine 408, and cysteine 378-cysteine 388. N-linked (GlcNAc...) asparagine glycosylation is present at asparagine 272. N-linked (GlcNAc...) asparagine glycosylation occurs at asparagine 392. 2 disulfides stabilise this stretch: cysteine 514–cysteine 578 and cysteine 547–cysteine 557. Residue asparagine 536 is glycosylated (N-linked (GlcNAc...) asparagine). Asparagine 679 carries an N-linked (GlcNAc...) asparagine glycan. The lysine tyrosylquinone (Lys-Tyr) cross-link spans 688–724; that stretch reads KASFCLEDTDCDEGVSKRYKCANFGEQGITVGCWDLY. A 2',4',5'-topaquinone modification is found at tyrosine 724.

This sequence belongs to the lysyl oxidase family. Cu cation is required as a cofactor. It depends on lysine tyrosylquinone residue as a cofactor. The lysine tyrosylquinone cross-link (LTQ) is generated by condensation of the epsilon-amino group of a lysine with a topaquinone produced by oxidation of tyrosine.

Its subcellular location is the secreted. It is found in the extracellular space. The protein resides in the cytoplasm. It localises to the nucleus. The enzyme catalyses L-lysyl-[protein] + O2 + H2O = (S)-2-amino-6-oxohexanoyl-[protein] + H2O2 + NH4(+). It catalyses the reaction N(6)-acetyl-L-lysyl-[protein] + O2 + H2O = acetamide + (S)-2-amino-6-oxohexanoyl-[protein] + H2O2. Functionally, protein-lysine 6-oxidase that mediates the oxidation of peptidyl lysine residues to allysine in target proteins. Catalyzes the post-translational oxidative deamination of peptidyl lysine residues in precursors of elastin and different types of collagens, a prerequisite in the formation of cross-links between collagens and elastin. Can mediate oxidation of lysine residues that are acetylated. Also able to catalyze deacetylation of lysine residues. Required for maturation of neural crest derived cartilage elements. The polypeptide is Lysyl oxidase homolog 3B (Danio rerio (Zebrafish)).